The sequence spans 526 residues: Protein DETOXIFICATION 43 (526 aa).

Residues 1-36 (MTETGDDLATVKKPIPFLVIFKDLRHVFSRDTTGRE) lie on the Cytoplasmic side of the membrane. A helical membrane pass occupies residues 37-57 (ILGIAFPAALALAADPIASLI). Residues 58–59 (DT) lie on the Extracellular side of the membrane. The helical transmembrane segment at 60–80 (AFVGRLGAVQLAAVGVSIAIF) threads the bilayer. The Cytoplasmic segment spans residues 81–170 (NQASRITIFP…NKKEKRTIRT (90 aa)). The tract at residues 133–166 (ISSPTSNDTNQPQQPPAPDTKSNSGNKSNKKEKR) is disordered. Residues 134-144 (SSPTSNDTNQP) are compositionally biased toward polar residues. A helical transmembrane segment spans residues 171 to 191 (ASTAMILGLILGLVQAIFLIF). The Extracellular portion of the chain corresponds to 192-215 (SSKLLLGVMGVKPNSPMLSPAHKY). The helical transmembrane segment at 216–236 (LSIRALGAPALLLSLAMQGIF) threads the bilayer. Topologically, residues 237–244 (RGFKDTKT) are cytoplasmic. Residues 245 to 267 (PLFATVVADVINIVLDPIFIFVL) form a helical membrane-spanning segment. Over 268 to 270 (RLG) the chain is Extracellular. Residues 271–293 (IIGAAIAHVISQYFMTLILFVFL) traverse the membrane as a helical segment. Over 294 to 316 (AKKVNLIPPNFGDLQFGRFLKNG) the chain is Cytoplasmic. Residues 317-337 (LLLLARTIAVTFCQTLAAAMA) traverse the membrane as a helical segment. Residues 338–353 (ARLGTTPMAAFQICLQ) lie on the Extracellular side of the membrane. Residues 354-374 (VWLTSSLLNDGLAVAGQAILA) form a helical membrane-spanning segment. Over 375–396 (CSFAEKDYNKVTAVASRVLQMG) the chain is Cytoplasmic. Residues 397–417 (FVLGLGLSVFVGLGLYFGAGV) form a helical membrane-spanning segment. At 418 to 426 (FSKDPAVIH) the chain is on the extracellular side. A helical membrane pass occupies residues 427–447 (LMAIGIPFIAATQPINSLAFV). The Cytoplasmic portion of the chain corresponds to 448–457 (LDGVNFGASD). A helical transmembrane segment spans residues 458–478 (FAYTAYSMVGVAAISIAAVIY). At 479-484 (MAKTNG) the chain is on the extracellular side. The chain crosses the membrane as a helical span at residues 485-505 (FIGIWIALTIYMALRAITGIA). Residues 506–526 (RMATGTGPWRFLRGRSSSSSS) are Cytoplasmic-facing.

It belongs to the multi antimicrobial extrusion (MATE) (TC 2.A.66.1) family. Expressed in roots in the pericycle and cells internal to the pericycle and surrounding the vascular tissue. Also expressed in seed and flower.

Its subcellular location is the cell membrane. Citrate transporter responsible for loading citrate into xylem tissues, which helps facilitate iron transport to shoots. Mediates the citrate release in the apoplastic spaces during plant development allowing iron nutrition between symplastically disconnected tissues. The sequence is that of Protein DETOXIFICATION 43 from Arabidopsis thaliana (Mouse-ear cress).